A 153-amino-acid polypeptide reads, in one-letter code: Movement protein (153 aa).

Disordered stretches follow at residues 1–24 (MAQE…EQDP) and 121–153 (PWVA…RNQR). Residues 121-138 (PWVATLIPSQSAGPPQRS) are compositionally biased toward polar residues.

Belongs to the luteoviruses movement protein family.

Its function is as follows. Transports viral genome to neighboring plant cells directly through plasmosdesmata, without any budding. The movement protein allows efficient cell to cell propagation, by bypassing the host cell wall barrier. The chain is Movement protein from Avena byzantina (Oat).